Consider the following 316-residue polypeptide: Alkaline ceramidase YPC1 (316 aa).

Residues 1–36 (MGIFRWNYPESSVPGVWGETTSTIDWCEENYVVSPY) lie on the Lumenal side of the membrane. Cysteines 27 and 219 form a disulfide. An intramembrane segment occupies 37-57 (IAEWSNTLTNSVFILSAIYTT). Over 58–68 (YSAYKNKLEKR) the chain is Lumenal. Residues 69-89 (FLLIGFGYGLVGVGSWLFHMT) lie within the membrane without spanning it. The Lumenal segment spans residues 90–93 (LKYR). The helical transmembrane segment at 94–114 (FQLLDELPMIYAMCIPTWSLV) threads the bilayer. The Cytoplasmic segment spans residues 115-135 (CEAKEALLNGDNHKKVPLFEQ). The chain crosses the membrane as a helical span at residues 136–156 (IFIGVIIGLAVTTASILYVIY). Topologically, residues 157–160 (KNVD) are lumenal. The stretch at 161–181 (IHQILFGVQIVVVAATAGSLT) is an intramembrane region. Topologically, residues 182–195 (YRYVHDPLAKRNLK) are lumenal. An intramembrane segment occupies 196 to 216 (ASMALGAILFLSGYISWLLDI). Residues 217 to 228 (HYCSFWVHVRRS) are Lumenal-facing. Residues 229-249 (ILALPLGVLLEPHGWWHILTG) form a helical membrane-spanning segment. Residues 250-316 (MGIYFYIVSL…DQSIEVKKEK (67 aa)) lie on the Cytoplasmic side of the membrane.

The protein belongs to the alkaline ceramidase family.

It localises to the endoplasmic reticulum membrane. The enzyme catalyses N-hexanoyl-sphinganine + H2O = hexanoate + sphinganine. It catalyses the reaction sphinganine + hexadecanoate = N-hexadecanoylsphinganine + H2O. The catalysed reaction is N-hexadecanoyl-(4R)-hydroxysphinganine + H2O = (4R)-hydroxysphinganine + hexadecanoate. It carries out the reaction N-hexadecanoylsphing-4-enine + H2O = sphing-4-enine + hexadecanoate. The enzyme catalyses an N-acyl-(4R)-4-hydroxysphinganine + H2O = (4R)-hydroxysphinganine + a fatty acid. In terms of biological role, alkaline ceramidase that hydrolyzes phytoceramide and also dihydroceramide into phytosphingosine or dihydrosphingosine. Prefers phytoceramide. Also has reverse activity as acyl-CoA-independent ceramide synthase, catalyzing synthesis of phytoceramide and dihydroceramide from palmitic acid and phytosphingosine or dihydrosphingosine. Is not responsible for the breakdown of unsaturated ceramide. Preferentially uses very long chain fatty acids (C-24 and C-26) in vivo compared to C-16 in vitro. The protein is Alkaline ceramidase YPC1 (YPC1) of Saccharomyces cerevisiae (strain ATCC 204508 / S288c) (Baker's yeast).